Here is a 453-residue protein sequence, read N- to C-terminus: tRNA modification GTPase MnmE (453 aa).

(6S)-5-formyl-5,6,7,8-tetrahydrofolate is bound by residues Arg22, Glu79, and Lys119. The 162-residue stretch at Gly215–Gly376 folds into the TrmE-type G domain. Asn225 serves as a coordination point for K(+). Residues Asn225–Ser230, Thr244–Thr250, Asp269–Gly272, and Asn334–Asp337 contribute to the GTP site. Position 229 (Ser229) interacts with Mg(2+). Thr244, Ile246, and Thr249 together coordinate K(+). Thr250 serves as a coordination point for Mg(2+). Lys453 is a binding site for (6S)-5-formyl-5,6,7,8-tetrahydrofolate.

This sequence belongs to the TRAFAC class TrmE-Era-EngA-EngB-Septin-like GTPase superfamily. TrmE GTPase family. In terms of assembly, homodimer. Heterotetramer of two MnmE and two MnmG subunits. K(+) is required as a cofactor.

The protein localises to the cytoplasm. Functionally, exhibits a very high intrinsic GTPase hydrolysis rate. Involved in the addition of a carboxymethylaminomethyl (cmnm) group at the wobble position (U34) of certain tRNAs, forming tRNA-cmnm(5)s(2)U34. This Shewanella pealeana (strain ATCC 700345 / ANG-SQ1) protein is tRNA modification GTPase MnmE.